We begin with the raw amino-acid sequence, 676 residues long: UvrABC system protein C (676 aa).

The GIY-YIG domain maps to Val16–Ile95. The UVR domain maps to Asp208 to Ala243.

It belongs to the UvrC family. Interacts with UvrB in an incision complex.

It is found in the cytoplasm. In terms of biological role, the UvrABC repair system catalyzes the recognition and processing of DNA lesions. UvrC both incises the 5' and 3' sides of the lesion. The N-terminal half is responsible for the 3' incision and the C-terminal half is responsible for the 5' incision. The protein is UvrABC system protein C of Mycobacterium sp. (strain KMS).